The chain runs to 89 residues: Small ribosomal subunit protein uS15 (89 aa).

The protein belongs to the universal ribosomal protein uS15 family. In terms of assembly, part of the 30S ribosomal subunit. Forms a bridge to the 50S subunit in the 70S ribosome, contacting the 23S rRNA.

In terms of biological role, one of the primary rRNA binding proteins, it binds directly to 16S rRNA where it helps nucleate assembly of the platform of the 30S subunit by binding and bridging several RNA helices of the 16S rRNA. Forms an intersubunit bridge (bridge B4) with the 23S rRNA of the 50S subunit in the ribosome. This Erwinia tasmaniensis (strain DSM 17950 / CFBP 7177 / CIP 109463 / NCPPB 4357 / Et1/99) protein is Small ribosomal subunit protein uS15.